A 284-amino-acid chain; its full sequence is Diaminopimelate epimerase (284 aa).

Substrate-binding residues include Asn14 and Asn67. Cys76 (proton donor) is an active-site residue. Substrate is bound by residues 77–78, Asn166, Asn199, and 217–218; these read GN and ER. The active-site Proton acceptor is the Cys226. Residue 227 to 228 coordinates substrate; the sequence is GT.

The protein belongs to the diaminopimelate epimerase family. As to quaternary structure, homodimer.

The protein resides in the cytoplasm. The catalysed reaction is (2S,6S)-2,6-diaminopimelate = meso-2,6-diaminopimelate. The protein operates within amino-acid biosynthesis; L-lysine biosynthesis via DAP pathway; DL-2,6-diaminopimelate from LL-2,6-diaminopimelate: step 1/1. Its function is as follows. Catalyzes the stereoinversion of LL-2,6-diaminopimelate (L,L-DAP) to meso-diaminopimelate (meso-DAP), a precursor of L-lysine and an essential component of the bacterial peptidoglycan. The polypeptide is Diaminopimelate epimerase (Bacillus velezensis (strain DSM 23117 / BGSC 10A6 / LMG 26770 / FZB42) (Bacillus amyloliquefaciens subsp. plantarum)).